Consider the following 224-residue polypeptide: Putative N-acetylmannosamine-6-phosphate 2-epimerase (224 aa).

This sequence belongs to the NanE family.

The catalysed reaction is an N-acyl-D-glucosamine 6-phosphate = an N-acyl-D-mannosamine 6-phosphate. Its pathway is amino-sugar metabolism; N-acetylneuraminate degradation; D-fructose 6-phosphate from N-acetylneuraminate: step 3/5. Functionally, converts N-acetylmannosamine-6-phosphate (ManNAc-6-P) to N-acetylglucosamine-6-phosphate (GlcNAc-6-P). In Staphylococcus carnosus (strain TM300), this protein is Putative N-acetylmannosamine-6-phosphate 2-epimerase.